The following is a 118-amino-acid chain: Putative pterin-4-alpha-carbinolamine dehydratase (118 aa).

The protein belongs to the pterin-4-alpha-carbinolamine dehydratase family.

It carries out the reaction (4aS,6R)-4a-hydroxy-L-erythro-5,6,7,8-tetrahydrobiopterin = (6R)-L-erythro-6,7-dihydrobiopterin + H2O. In Xanthomonas campestris pv. campestris (strain B100), this protein is Putative pterin-4-alpha-carbinolamine dehydratase.